The primary structure comprises 354 residues: Serum paraoxonase/arylesterase 2 (354 aa).

Cysteines 42 and 352 form a disulfide. 2 residues coordinate Ca(2+): Glu53 and Asp54. The Proton acceptor role is filled by His114. 4 residues coordinate Ca(2+): Ile116, Asn167, Asp168, and Asn223. Asn254 carries an N-linked (GlcNAc...) asparagine glycan. Ca(2+) is bound by residues Asp268 and Asn269. N-linked (GlcNAc...) asparagine glycans are attached at residues Asn269 and Asn323.

The protein belongs to the paraoxonase family. Homotrimer. The cofactor is Ca(2+). In terms of processing, glycosylated. The signal sequence is not cleaved.

The protein resides in the membrane. It carries out the reaction a phenyl acetate + H2O = a phenol + acetate + H(+). It catalyses the reaction an N-acyl-L-homoserine lactone + H2O = an N-acyl-L-homoserine + H(+). Functionally, capable of hydrolyzing lactones and a number of aromatic carboxylic acid esters. The polypeptide is Serum paraoxonase/arylesterase 2 (Pon2) (Rattus norvegicus (Rat)).